A 347-amino-acid polypeptide reads, in one-letter code: Glutamyl-Q tRNA(Asp) synthetase (347 aa).

L-glutamate is bound by residues Arg31–Ser35 and Glu67. A 'HIGH' region motif is present at residues Pro34–Asn44. Cys121, Cys123, Tyr143, and Cys147 together coordinate Zn(2+). Residues Tyr203 and Arg221 each coordinate L-glutamate. Residues Arg259 to Ser263 carry the 'KMSKS' region motif. Lys262 serves as a coordination point for ATP.

This sequence belongs to the class-I aminoacyl-tRNA synthetase family. GluQ subfamily. The cofactor is Zn(2+).

Functionally, catalyzes the tRNA-independent activation of glutamate in presence of ATP and the subsequent transfer of glutamate onto a tRNA(Asp). Glutamate is transferred on the 2-amino-5-(4,5-dihydroxy-2-cyclopenten-1-yl) moiety of the queuosine in the wobble position of the QUC anticodon. The polypeptide is Glutamyl-Q tRNA(Asp) synthetase (Cutibacterium acnes (strain DSM 16379 / KPA171202) (Propionibacterium acnes)).